A 510-amino-acid polypeptide reads, in one-letter code: Cytochrome P450 52C2 (510 aa).

Cys458 is a binding site for heme.

This sequence belongs to the cytochrome P450 family. Heme is required as a cofactor.

It localises to the membrane. Its function is as follows. Together with an NADPH cytochrome P450 the enzyme system catalyzes the terminal hydroxylation as the first step in the assimilation of alkanes and fatty acids. This is Cytochrome P450 52C2 (CYP52C2) from Candida maltosa (Yeast).